The chain runs to 86 residues: Teretoxin Tsu6.16 (86 aa).

A signal peptide spans M1 to L21. Positions G22–N46 are excised as a propeptide.

This sequence belongs to the teretoxin M (TM) superfamily. Contains 3 disulfide bonds. As to expression, expressed by the venom duct.

The protein localises to the secreted. The polypeptide is Teretoxin Tsu6.16 (Terebra subulata (Chocolate spotted auger)).